Here is a 164-residue protein sequence, read N- to C-terminus: Transcription elongation factor GreA (164 aa).

The protein belongs to the GreA/GreB family.

In terms of biological role, necessary for efficient RNA polymerase transcription elongation past template-encoded arresting sites. The arresting sites in DNA have the property of trapping a certain fraction of elongating RNA polymerases that pass through, resulting in locked ternary complexes. Cleavage of the nascent transcript by cleavage factors such as GreA or GreB allows the resumption of elongation from the new 3'terminus. GreA releases sequences of 2 to 3 nucleotides. The polypeptide is Transcription elongation factor GreA (Helicobacter pylori (strain Shi470)).